The chain runs to 111 residues: Phosphoribosyl-ATP pyrophosphatase (111 aa).

Belongs to the PRA-PH family.

It localises to the cytoplasm. The enzyme catalyses 1-(5-phospho-beta-D-ribosyl)-ATP + H2O = 1-(5-phospho-beta-D-ribosyl)-5'-AMP + diphosphate + H(+). Its pathway is amino-acid biosynthesis; L-histidine biosynthesis; L-histidine from 5-phospho-alpha-D-ribose 1-diphosphate: step 2/9. This chain is Phosphoribosyl-ATP pyrophosphatase, found in Pseudomonas putida (strain W619).